The sequence spans 199 residues: Chaperone protein TorD (199 aa).

It belongs to the TorD/DmsD family. TorD subfamily.

It localises to the cytoplasm. Functionally, involved in the biogenesis of TorA. Acts on TorA before the insertion of the molybdenum cofactor and, as a result, probably favors a conformation of the apoenzyme that is competent for acquiring the cofactor. This chain is Chaperone protein TorD, found in Actinobacillus pleuropneumoniae serotype 3 (strain JL03).